Here is a 92-residue protein sequence, read N- to C-terminus: Regakine-1 (92 aa).

The N-terminal stretch at methionine 1 to alanine 21 is a signal peptide. Cystine bridges form between cysteine 32–cysteine 56 and cysteine 33–cysteine 72.

It belongs to the intercrine beta (chemokine CC) family. In terms of tissue distribution, plasma serum.

It is found in the secreted. Its function is as follows. Chemotactic activity for neutrophils and lymphocytes. Binds to heparin. The sequence is that of Regakine-1 from Bos taurus (Bovine).